Reading from the N-terminus, the 199-residue chain is MTTLTVQQIACVYAWLAQLFSRELDDEQLTQIASAQMAEWFSLLKSEPPLTAAVNGLENSIATLTVRDDARLELAADFCGLFLMTDKQAALPYASAYKQDEQEIKRLLVEAGMETSGNFNEPADHLAIYLELLSHLHFSLGEGTVPARRIDGLRQKTLTALREWLPEFAARCRQYDSFGFYAALSQLLLVLVECDYQKR.

The protein belongs to the TorD/DmsD family. TorD subfamily.

It localises to the cytoplasm. Its function is as follows. Involved in the biogenesis of TorA. Acts on TorA before the insertion of the molybdenum cofactor and, as a result, probably favors a conformation of the apoenzyme that is competent for acquiring the cofactor. In Escherichia coli O45:K1 (strain S88 / ExPEC), this protein is Chaperone protein TorD.